An 805-amino-acid chain; its full sequence is Polycystin-2-like protein 1 (805 aa).

Positions 1-59 are disordered; that stretch reads MNAVGSPEGQELQKLGSGAWDNPAYSGPPSPHGTLRVCTISSTGPLQPQPKKPEDEPQE. Residues 1-103 lie on the Cytoplasmic side of the membrane; it reads MNAVGSPEGQ…ELYIKTTLRE (103 aa). C38 is lipidated: S-palmitoyl cysteine. The helical transmembrane segment at 104-124 threads the bilayer; it reads LLVYIVFLVDICLLTYGMTSS. Over 125–356 the chain is Extracellular; sequence SAYYYTKVMS…NWDFFIVGCE (232 aa). Residues N177 and N207 are each glycosylated (N-linked (GlcNAc...) asparagine). C210 and C223 are disulfide-bonded. N-linked (GlcNAc...) asparagine glycosylation is present at N241. Residues 357–376 form a helical membrane-spanning segment; sequence VIFCVFIFYYVVEEILELHI. 2 residues coordinate Ca(2+): E370 and E373. The Cytoplasmic segment spans residues 377–384; that stretch reads HRLRYLSS. A helical membrane pass occupies residues 385-405; that stretch reads IWNILDLVVILLSIVAVGFHI. Residues N387 and D390 each contribute to the Ca(2+) site. Over 406-433 the chain is Extracellular; the sequence is FRTLEVNRLMGKLLQQPNTYADFEFLAF. Residues 434 to 454 traverse the membrane as a helical segment; sequence WQTQYNNMNAVNLFFAWIKIF. Residues 455–479 are Cytoplasmic-facing; sequence KYISFNKTMTQLSSTLARCAKDILG. The chain crosses the membrane as a helical span at residues 480 to 499; the sequence is FAVMFFIVFFAYAQLGYLLF. Topologically, residues 500–511 are extracellular; it reads GTQVENFSTFIK. N-linked (GlcNAc...) asparagine glycosylation is present at N505. Residues 512-526 constitute an intramembrane region (pore-forming); it reads CIFTQFRIILGDFDY. Residues 527–536 lie on the Extracellular side of the membrane; that stretch reads NAIDNANRIL. A helical membrane pass occupies residues 537-557; that stretch reads GPAYFVTYVFFVFFVLLNMFL. Over 558–805 the chain is Cytoplasmic; sequence AIINDTYSEV…RGEIPTLQRS (248 aa). The region spanning 633–668 is the EF-hand domain; sequence HEITELTATFTKFDRDGNRILDEKEQEKMRQDLEEE. 2 coiled-coil regions span residues 650 to 686 and 700 to 740; these read NRIL…IVSS and GWVS…MLER. The required for homooligomerization stretch occupies residues 704–763; the sequence is GEEFYMLTRRVLQLETVLEGVVSQIDAVGSKLKMLERKGWLAPSPGVKEQAIWKHPQPAP. Residues 759 to 805 are disordered; the sequence is PQPAPAVTPDPWGVQGGQESEVPYKREEEALEERRLSRGEIPTLQRS. A compositionally biased stretch (basic and acidic residues) spans 780 to 796; the sequence is VPYKREEEALEERRLSR.

This sequence belongs to the polycystin family. As to quaternary structure, oligomer. Functional PKD2L1 homotetramer can be formed either through C-terminal trimerization followed by N-terminal dimerization of a fourth subunit with a subunit in the trimer or through dimerization followed by trimerization. Heterotetramer with either PKD1L1, PKD1L3 or PKD1; the heterotetrameric complex contains three PKD1L2 chains plus one chain from another family member. Interacts with PKD1L1, forming a ciliary calcium channel. Interacts with PKD1L3, forming a cation channel that is activated by low extracellular pH. Interacts with PKD1; this heteromeric functional cation channels is opened by hypo-osmotic stimulation. Interacts with RACK1; inhibits the channel activity possibly by impairing localization to the cell membrane. In terms of processing, palmitoylation is important for expression at the cell membrane and for channel activity. As to expression, detected in taste bud cells in fungiform papillae (at protein level). Ubiquitous. Expressed in adult heart, skeletal muscle, brain, spleen, testis, retina and liver. Isoform 4 appears to be expressed only in transformed lymphoblasts.

The protein localises to the cell projection. It is found in the cilium membrane. The protein resides in the cell membrane. It localises to the cytoplasmic vesicle. It carries out the reaction Ca(2+)(in) = Ca(2+)(out). The enzyme catalyses Na(+)(in) = Na(+)(out). The catalysed reaction is K(+)(in) = K(+)(out). It catalyses the reaction Mg(2+)(in) = Mg(2+)(out). The non-selective cation channel is gated following an off-response property by acid: gated open after the removal of acid stimulus, but not during acid application. Channel activity is inhibited by phosphatidylinositol-4,5-bisphosphate (PIP2). Non-selective cation channel activity is substantially increased when either the extracellular or intracellular calcium-ion concentration is raised. Regulation of non-selective cation channel activity by external calcium is bimodal, first sensitizing and subsequently inactivating the current. Homotetrameric, non-selective cation channel that is permeable to sodium, potassium, magnesium and calcium. Also forms functionnal heteromeric channels with PKD1, PKD1L1 and PKD1L3. Pore-forming subunit of a heterotetrameric, non-selective cation channel, formed by PKD1L2 and PKD1L3, that is permeable to sodium, potassium, magnesium and calcium and which may act as a sour taste receptor in gustatory cells; however, its contribution to sour taste perception is unclear in vivo and may be indirect. The homomeric and heteromeric channels formed by PKD1L2 and PKD1L3 are activated by low pH and Ca(2+), but opens only when the extracellular pH rises again and after the removal of acid stimulus. Pore-forming subunit of a calcium-permeant ion channel formed by PKD1L2 and PKD1L1 in primary cilia, where it controls cilium calcium concentration, without affecting cytoplasmic calcium concentration, and regulates sonic hedgehog/SHH signaling and GLI2 transcription. The PKD1L1:PKD2L1 complex channel is mechanosensitive only at high pressures and is highly temperature sensitive. Pore-forming subunit of a calcium-permeant ion channel formed by PKD1L2 and PKD1 that produces a transient increase in intracellular calcium concentration upon hypo-osmotic stimulation (200 mOsm). May play a role in the perception of carbonation taste. May play a role in the sensory perception of water, via a mechanism that activates the channel in response to dilution of salivary bicarbonate and changes in salivary pH. This is Polycystin-2-like protein 1 from Homo sapiens (Human).